Reading from the N-terminus, the 755-residue chain is Bacteriophytochrome (755 aa).

Cys24 contributes to the a tetrapyrrole binding site. A PAS domain is found at 26–94 (REPIHIPGSI…LQAALPPGCP (69 aa)). The interval 95-504 (DALQYRATLD…RDTLTGALGE (410 aa)) is chromophore binding domain. The region spanning 152–316 (NLRALAEVAT…YLGRLLSLQV (165 aa)) is the GAF domain. The Histidine kinase domain maps to 529-747 (VISHHMQEPV…TFRCWLPDAG (219 aa)). His532 is modified (phosphohistidine; by autocatalysis).

The protein in the N-terminal section; belongs to the phytochrome family. Contains one covalently linked tetrapyrrole chromophore. Lacks the cysteine conserved in plant phytochromes (at the position of Met-259) that binds chromophore. An engineered sequence used for X-ray crystallography forms a thioether link to biliverdin through Cys-24. The natural sequence can bind phycocyanobilin and phytochromobilin in vitro, but the identity of the natural chromophore is unknown.

The catalysed reaction is ATP + protein L-histidine = ADP + protein N-phospho-L-histidine.. Functionally, photoreceptor which exists in two forms that are reversibly interconvertible by light: the R form that absorbs maximally in the red region of the spectrum and the FR form that absorbs maximally in the far-red region. Also has a slight blue shift for the far-red maximum. Could also absorb green light. May participate in regulating pigment synthesis like the carotenoid deinoxanthin which could protect the bacterium from intense visible light. In Deinococcus radiodurans (strain ATCC 13939 / DSM 20539 / JCM 16871 / CCUG 27074 / LMG 4051 / NBRC 15346 / NCIMB 9279 / VKM B-1422 / R1), this protein is Bacteriophytochrome (bphP).